Reading from the N-terminus, the 599-residue chain is Elongation factor 4 (599 aa).

The 183-residue stretch at Asn-2–Glu-184 folds into the tr-type G domain. GTP contacts are provided by residues Asp-14–Thr-19 and Asn-131–Asp-134.

It belongs to the TRAFAC class translation factor GTPase superfamily. Classic translation factor GTPase family. LepA subfamily.

It is found in the cell inner membrane. It catalyses the reaction GTP + H2O = GDP + phosphate + H(+). Required for accurate and efficient protein synthesis under certain stress conditions. May act as a fidelity factor of the translation reaction, by catalyzing a one-codon backward translocation of tRNAs on improperly translocated ribosomes. Back-translocation proceeds from a post-translocation (POST) complex to a pre-translocation (PRE) complex, thus giving elongation factor G a second chance to translocate the tRNAs correctly. Binds to ribosomes in a GTP-dependent manner. This Yersinia pestis (strain Pestoides F) protein is Elongation factor 4.